A 469-amino-acid chain; its full sequence is UDP-N-acetylmuramate--L-alanine ligase (469 aa).

ATP is bound at residue Gly114–Thr120.

This sequence belongs to the MurCDEF family.

The protein resides in the cytoplasm. The enzyme catalyses UDP-N-acetyl-alpha-D-muramate + L-alanine + ATP = UDP-N-acetyl-alpha-D-muramoyl-L-alanine + ADP + phosphate + H(+). It functions in the pathway cell wall biogenesis; peptidoglycan biosynthesis. Cell wall formation. This is UDP-N-acetylmuramate--L-alanine ligase from Sinorhizobium fredii (strain NBRC 101917 / NGR234).